A 213-amino-acid polypeptide reads, in one-letter code: Agglutinin isolectin 2 (213 aa).

A signal peptide spans 1–27; it reads MRKMMSTMALTLGAAVFLAFAAATAQA. Glutamine 28 is subject to Pyrrolidone carboxylic acid. 4 Chitin-binding type-1 domains span residues 28-69, 70-112, 113-155, and 156-198; these read QRCG…ACWT, SKRC…PCRA, DIKC…ACST, and DKPC…GCDA. 16 disulfides stabilise this stretch: cysteine 30/cysteine 45, cysteine 39/cysteine 51, cysteine 44/cysteine 58, cysteine 62/cysteine 67, cysteine 73/cysteine 88, cysteine 82/cysteine 94, cysteine 87/cysteine 101, cysteine 105/cysteine 110, cysteine 116/cysteine 131, cysteine 125/cysteine 137, cysteine 130/cysteine 144, cysteine 148/cysteine 153, cysteine 159/cysteine 174, cysteine 168/cysteine 180, cysteine 173/cysteine 187, and cysteine 191/cysteine 196. 37 to 39 is a binding site for substrate; sequence MEC. 89 to 100 contributes to the substrate binding site; sequence SQYGHCGFGAEY. A substrate-binding site is contributed by 141–142; the sequence is SE. Positions 199-213 are excised as a propeptide; the sequence is VFAGAITANSTLLAE.

Homodimer, u-shaped.

N-acetyl-D-glucosamine / N-acetyl-D-neuraminic acid binding lectin. This Triticum aestivum (Wheat) protein is Agglutinin isolectin 2.